The primary structure comprises 120 residues: Aspartate 1-decarboxylase (120 aa).

S25 (schiff-base intermediate with substrate; via pyruvic acid) is an active-site residue. S25 is subject to Pyruvic acid (Ser). Residue T57 participates in substrate binding. Residue Y58 is the Proton donor of the active site. 73–75 provides a ligand contact to substrate; it reads GAA.

It belongs to the PanD family. In terms of assembly, heterooctamer of four alpha and four beta subunits. Pyruvate is required as a cofactor. Post-translationally, is synthesized initially as an inactive proenzyme, which is activated by self-cleavage at a specific serine bond to produce a beta-subunit with a hydroxyl group at its C-terminus and an alpha-subunit with a pyruvoyl group at its N-terminus.

The protein resides in the cytoplasm. The enzyme catalyses L-aspartate + H(+) = beta-alanine + CO2. The protein operates within cofactor biosynthesis; (R)-pantothenate biosynthesis; beta-alanine from L-aspartate: step 1/1. Catalyzes the pyruvoyl-dependent decarboxylation of aspartate to produce beta-alanine. The protein is Aspartate 1-decarboxylase of Deinococcus geothermalis (strain DSM 11300 / CIP 105573 / AG-3a).